Reading from the N-terminus, the 898-residue chain is Chloride channel protein 2 (898 aa).

Residues 1 to 90 (MAAPAAAAVE…RCHKFLVSRV (90 aa)) lie on the Cytoplasmic side of the membrane. Residues 19–37 (QYEQTLMYGRYTQDLGAFA) form an essential for channel gating by both voltage and cell volume region. A Phosphothreonine modification is found at Thr23. Positions 39–52 (EEAARIRLGGPEPW) are modulates channel gating by both voltage and cell volume. The next 2 helical transmembrane spans lie at 91–124 (GEDW…AQQW) and 133–158 (LLLQ…TQIL). Residues 164–168 (GSGIP) carry the Selectivity filter part_1 motif. The helical intramembrane region spans 167–174 (IPEMKTIL). A run of 2 helical transmembrane segments spans residues 183–201 (LTLK…ALGS) and 208–226 (EGPF…SKFL). The Selectivity filter part_2 signature appears at 206 to 210 (GKEGP). 2 consecutive intramembrane regions (helical) follow at residues 242-254 (MLAA…VGCC) and 258-266 (PIGGVLFSI). 5 consecutive transmembrane segments (helical) span residues 278–298 (YWRG…LAVW), 324–352 (LPAF…VQVM), 361–380 (FLMR…ISTL), 432–452 (ANVF…SALA), and 460–483 (GAFM…MAAW). The Selectivity filter part_3 motif lies at 460–464 (GAFMP). Positions 500 to 514 (GGYAVVGAAALAGAV) form an intramembrane region, helical. The note=Loop between two helices intramembrane region spans 515–516 (TH). Residues 517–528 (TVSTAVIVFELT) constitute an intramembrane region (helical). The segment at residues 529 to 533 (GQIAH) is an intramembrane region (note=Loop between two helices). Residues 534–551 (ILPVMIAVILANAVAQSL) form a helical membrane-spanning segment. The Cytoplasmic segment spans residues 552–898 (QPSLYDSIIR…SPSDSDDKCQ (347 aa)). In terms of domain architecture, CBS 1 spans 587–645 (MVRDVPHVALSCTFRDLRLALHRTKGRTLALVESPESMILLGSIERTQVVALLAAQLSP). The segment covering 647–658 (RRRQSKQKRRVA) has biased composition (basic residues). The disordered stretch occupies residues 647-675 (RRRQSKQKRRVAHTSPPSCQESPPSPETS). Ser710 is subject to Phosphoserine. Positions 726–766 (FCGSPPPEAASESEKSESSEKRKSKRVRISLASDSDLEGEM) are disordered. The span at 737–746 (ESEKSESSEK) shows a compositional bias: basic and acidic residues. Position 758 is a phosphoserine (Ser758). A CBS 2 domain is found at 790-850 (IDPAPFQLVE…GSVTAQGVKV (61 aa)). The Basolateral membrane sorting motif lies at 812–813 (LL). A disordered region spans residues 856–898 (SFRDSATSSSDTETTEVHALWGPRSRHGLPREGSPSDSDDKCQ).

Belongs to the chloride channel (TC 2.A.49) family. ClC-2/CLCN2 subfamily. As to quaternary structure, homodimer. Interacts with auxiliary subunit HEPACAM. Phosphorylated. Activated by dephosphorylation. Ubiquitously expressed.

It is found in the cell membrane. Its subcellular location is the basolateral cell membrane. It localises to the cell projection. The protein localises to the dendritic spine membrane. The protein resides in the axon. The catalysed reaction is chloride(in) = chloride(out). It catalyses the reaction thiocyanate(in) = thiocyanate(out). The enzyme catalyses bromide(in) = bromide(out). It carries out the reaction nitrate(in) = nitrate(out). The catalysed reaction is iodide(out) = iodide(in). With respect to regulation, common gate kinetics are down-regulated by intracellular ATP. Inhibited by AK-42, a derivative of meclofenamate. Inhibited by Cd(2+). Inhibited by Zn(2+) and PKC activation. Inhibited at acidic pH. CCLN2:HEPACAM channel conductance is up-regulated upon hypo-osmolarity. In terms of biological role, voltage-gated and osmosensitive chloride channel. Forms a homodimeric channel where each subunit has its own ion conduction pathway. Conducts double-barreled currents controlled by two types of gates, two fast glutamate gates that control each subunit independently and a slow common gate that opens and shuts off both subunits simultaneously. Displays inward rectification currents activated upon membrane hyperpolarization and extracellular hypotonicity. Contributes to chloride conductance involved in neuron excitability. In hippocampal neurons, generates a significant part of resting membrane conductance and provides an additional chloride efflux pathway to prevent chloride accumulation in dendrites upon GABA receptor activation. In glia, associates with the auxiliary subunit HEPACAM/GlialCAM at astrocytic processes and myelinated fiber tracts where it may regulate transcellular chloride flux buffering extracellular chloride and potassium concentrations. Regulates aldosterone production in adrenal glands. The opening of CLCN2 channels at hyperpolarized membrane potentials in the glomerulosa causes cell membrane depolarization, activation of voltage-gated calcium channels and increased expression of aldosterone synthase, the rate-limiting enzyme for aldosterone biosynthesis. Contributes to chloride conductance in retinal pigment epithelium involved in phagocytosis of shed photoreceptor outer segments and photoreceptor renewal. Conducts chloride currents at the basolateral membrane of epithelial cells with a role in chloride reabsorption rather than secretion. Permeable to small monovalent anions with chloride &gt; thiocyanate &gt; bromide &gt; nitrate &gt; iodide ion selectivity. The chain is Chloride channel protein 2 (CLCN2) from Oryctolagus cuniculus (Rabbit).